The following is a 318-amino-acid chain: Glutathione synthetase (318 aa).

Residues 125–311 (EKLFTAWFPE…ITGKLMDAIE (187 aa)) enclose the ATP-grasp domain. 151–208 (FRQEHGDIILKPLDGMGGASIFRVKENDPNVSVIIETLTNHGQNYAMAQTFVPDISNG) contacts ATP. Mg(2+)-binding residues include Glu282 and Asn284.

The protein belongs to the prokaryotic GSH synthase family. It depends on Mg(2+) as a cofactor. Mn(2+) serves as cofactor.

The catalysed reaction is gamma-L-glutamyl-L-cysteine + glycine + ATP = glutathione + ADP + phosphate + H(+). The protein operates within sulfur metabolism; glutathione biosynthesis; glutathione from L-cysteine and L-glutamate: step 2/2. This chain is Glutathione synthetase, found in Vibrio vulnificus (strain YJ016).